The following is a 176-amino-acid chain: Cytochrome b561 homolog 1 (176 aa).

Residues 1 to 7 (MNRFSKT) are Cytoplasmic-facing. A helical transmembrane segment spans residues 8-28 (QIYLHWITLLFVAITYAAMEL). His-12 lines the heme b pocket. At 29–45 (RGWFPKGSSTYLLMRET) the chain is on the periplasmic side. His-46 lines the heme b pocket. A helical transmembrane segment spans residues 46–63 (HYNAGIFVWVLMFSRLII). The Cytoplasmic portion of the chain corresponds to 64–85 (KHRYSDPSIVPPPPAWQMKAAS). A helical transmembrane segment spans residues 86–106 (LMHIMLYITFLALPLLGIALM). Over 107-141 (AYSGKSWSFLGFNVSPFVTPNSEIKALIKNIHETW) the chain is Periplasmic. Heme b contacts are provided by His-138 and His-152. A helical membrane pass occupies residues 142–162 (ANIGYFLIAAHAGAALFHHYI). Topologically, residues 163–176 (QKDNTLLRMMPRRK) are cytoplasmic.

Belongs to the cytochrome b561 family. Heme b is required as a cofactor.

It is found in the cell inner membrane. The polypeptide is Cytochrome b561 homolog 1 (yodB) (Escherichia coli (strain K12)).